A 182-amino-acid polypeptide reads, in one-letter code: ATP-dependent protease subunit HslV (182 aa).

Residue Thr6 is part of the active site. 3 residues coordinate Na(+): Ala164, Cys167, and Thr170.

The protein belongs to the peptidase T1B family. HslV subfamily. A double ring-shaped homohexamer of HslV is capped on each side by a ring-shaped HslU homohexamer. The assembly of the HslU/HslV complex is dependent on binding of ATP.

Its subcellular location is the cytoplasm. It carries out the reaction ATP-dependent cleavage of peptide bonds with broad specificity.. With respect to regulation, allosterically activated by HslU binding. In terms of biological role, protease subunit of a proteasome-like degradation complex believed to be a general protein degrading machinery. In Borrelia garinii subsp. bavariensis (strain ATCC BAA-2496 / DSM 23469 / PBi) (Borreliella bavariensis), this protein is ATP-dependent protease subunit HslV.